Consider the following 352-residue polypeptide: C-X-C chemokine receptor type 4 (352 aa).

Positions 1 to 21 (MEGISIYTSDNYTEEIGSGDY) are important for chemokine binding and signaling. Over 1–38 (MEGISIYTSDNYTEEIGSGDYDSIKEPCFREENAHFNR) the chain is Extracellular. Tyr7 carries the post-translational modification Sulfotyrosine. Asn11 carries N-linked (GlcNAc...) asparagine glycosylation. Tyr12 carries the post-translational modification Sulfotyrosine. Ser18 is a glycosylation site (O-linked (Xyl...) (chondroitin sulfate) serine). Residue Tyr21 is modified to Sulfotyrosine. Intrachain disulfides connect Cys28–Cys274 and Cys109–Cys186. Residues 39-63 (IFLPTIYSIIFLTGIVGNGLVILVM) traverse the membrane as a helical segment. Over 64–77 (GYQKKLRSMTDKYR) the chain is Cytoplasmic. A helical membrane pass occupies residues 78-99 (LHLSVADLLFVITLPFWAVDAV). The segment at 94 to 97 (WAVD) is chemokine binding. Over 100–110 (ANWYFGKFLCK) the chain is Extracellular. The helical transmembrane segment at 111 to 130 (AVHVIYTVNLYSSVLILAFI) threads the bilayer. The tract at residues 113 to 117 (HVIYT) is chemokine binding. Residues 131-154 (SLDRYLAIVHATNSQRPRKLLAEK) are Cytoplasmic-facing. The Important for signaling motif lies at 133 to 135 (DRY). The segment at 135–147 (YLAIVHATNSQRP) is involved in dimerization; when bound to chemokine. The helical transmembrane segment at 155-174 (VVYVGVWIPALLLTIPDFIF) threads the bilayer. The Extracellular portion of the chain corresponds to 175 to 195 (ANVSEADDRYICDRFYPNDLW). The segment at 186-190 (CDRFY) is chemokine binding, important for signaling. Residues 191–210 (PNDLWVVVFQFQHIMVGLIL) are involved in dimerization. Residues 196–216 (VVVFQFQHIMVGLILPGIVIL) traverse the membrane as a helical segment. Topologically, residues 217 to 241 (SCYCIIISKLSHSKGHQKRKALKTT) are cytoplasmic. The chain crosses the membrane as a helical span at residues 242 to 261 (VILILAFFACWLPYYIGISI). The Extracellular segment spans residues 262–282 (DSFILLEIIRQGCEFENTVHK). An involved in dimerization region spans residues 266 to 268 (LLE). Residues 283 to 302 (WISITEALAFFHCCLNPILY) traverse the membrane as a helical segment. Residues 303–352 (AFLGAKFKTSAQHALTSVSRGSSLKILSKGKRGGHSSVSTESESSSFHSS) are Cytoplasmic-facing. Phosphoserine is present on residues Ser319 and Ser321. 2 positions are modified to phosphoserine; by PKC and GRK6: Ser324 and Ser325. Positions 329–352 (LSKGKRGGHSSVSTESESSSFHSS) are disordered. Ser330 carries the post-translational modification Phosphoserine; by GRK6. Lys331 is covalently cross-linked (Glycyl lysine isopeptide (Lys-Gly) (interchain with G-Cter in ubiquitin)). The span at 337-352 (HSSVSTESESSSFHSS) shows a compositional bias: low complexity. Ser339 is modified (phosphoserine; by GRK6). 2 positions are modified to phosphoserine: Ser348 and Ser351.

It belongs to the G-protein coupled receptor 1 family. As to quaternary structure, monomer. Can form homodimers. Interacts with CD164. Interacts with ARRB2; the interaction is dependent on the C-terminal phosphorylation of CXCR4 and allows activation of MAPK1 and MAPK3. Interacts with ARR3; the interaction is dependent on the C-terminal phosphorylation of CXCR4 and modulates calcium mobilization. Interacts with RNF113A; the interaction, enhanced by CXCL12, promotes CXCR4 ubiquitination and subsequent degradation. Interacts (via the cytoplasmic C-terminal) with ITCH (via the WW domains I and II); the interaction, enhanced by CXCL12, promotes CXCR4 ubiquitination and leads to its degradation. Interacts with extracellular ubiquitin. Interacts with DBN1; this interaction is enhanced by antigenic stimulation. Following LPS binding, may form a complex with GDF5, HSP90AA1 and HSPA8. Phosphorylated on agonist stimulation. Rapidly phosphorylated on serine and threonine residues in the C-terminal. Phosphorylation at Ser-324 and Ser-325 leads to recruitment of ITCH, ubiquitination and protein degradation. Post-translationally, ubiquitinated after ligand binding, leading to its degradation. Ubiquitinated by ITCH at the cell membrane on agonist stimulation. The ubiquitin-dependent mechanism, endosomal sorting complex required for transport (ESCRT), then targets CXCR4 for lysosomal degradation. This process is dependent also on prior Ser-/Thr-phosphorylation in the C-terminal of CXCR4. Also binding of ARRB1 to STAM negatively regulates CXCR4 sorting to lysosomes though modulating ubiquitination of SFR5S. In terms of processing, sulfation is required for efficient binding of CXCL12/SDF-1alpha and promotes its dimerization. O- and N-glycosylated. N-glycosylation can mask coreceptor function. The O-glycosylation chondroitin sulfate attachment does not affect interaction with CXCL12/SDF-1alpha nor its coreceptor activity.

The protein resides in the cell membrane. It localises to the cell junction. The protein localises to the early endosome. It is found in the late endosome. Its subcellular location is the lysosome. Functionally, receptor for the C-X-C chemokine CXCL12/SDF-1 that transduces a signal by increasing intracellular calcium ion levels and enhancing MAPK1/MAPK3 activation. Involved in the AKT signaling cascade. Plays a role in regulation of cell migration, e.g. during wound healing. Acts as a receptor for extracellular ubiquitin; leading to enhanced intracellular calcium ions and reduced cellular cAMP levels. Binds bacterial lipopolysaccharide (LPS) et mediates LPS-induced inflammatory response, including TNF secretion by monocytes. Involved in hematopoiesis and in cardiac ventricular septum formation. Also plays an essential role in vascularization of the gastrointestinal tract, probably by regulating vascular branching and/or remodeling processes in endothelial cells. Involved in cerebellar development. In the CNS, could mediate hippocampal-neuron survival. This Callithrix jacchus (White-tufted-ear marmoset) protein is C-X-C chemokine receptor type 4 (CXCR4).